The chain runs to 220 residues: Large ribosomal subunit protein bL25 (220 aa).

Belongs to the bacterial ribosomal protein bL25 family. CTC subfamily. In terms of assembly, part of the 50S ribosomal subunit; part of the 5S rRNA/L5/L18/L25 subcomplex. Contacts the 5S rRNA. Binds to the 5S rRNA independently of L5 and L18.

Functionally, this is one of the proteins that binds to the 5S RNA in the ribosome where it forms part of the central protuberance. The sequence is that of Large ribosomal subunit protein bL25 from Zymomonas mobilis subsp. mobilis (strain ATCC 31821 / ZM4 / CP4).